An 829-amino-acid chain; its full sequence is Periplasmic nitrate reductase (829 aa).

A signal peptide (tat-type signal) is located at residues Met1 to Ala30. The 4Fe-4S Mo/W bis-MGD-type domain maps to Ile41–Asp97. Residues Cys48, Cys51, Cys55, and Cys83 each coordinate [4Fe-4S] cluster. Residues Lys85, Gln152, Asn177, Cys181, Trp214–Met221, Ser245–His249, Gln264–Asp266, Met374, Gln378, Asn484, Ser510–Asp511, Lys533, Asp560, and Thr718–Thr727 contribute to the Mo-bis(molybdopterin guanine dinucleotide) site. Phe794 contributes to the substrate binding site. Mo-bis(molybdopterin guanine dinucleotide)-binding residues include Asn802 and Lys819.

This sequence belongs to the prokaryotic molybdopterin-containing oxidoreductase family. NasA/NapA/NarB subfamily. As to quaternary structure, component of the periplasmic nitrate reductase NapAB complex composed of NapA and NapB. It depends on [4Fe-4S] cluster as a cofactor. Requires Mo-bis(molybdopterin guanine dinucleotide) as cofactor. Post-translationally, predicted to be exported by the Tat system. The position of the signal peptide cleavage has not been experimentally proven.

Its subcellular location is the periplasm. The enzyme catalyses 2 Fe(II)-[cytochrome] + nitrate + 2 H(+) = 2 Fe(III)-[cytochrome] + nitrite + H2O. Functionally, catalytic subunit of the periplasmic nitrate reductase complex NapAB. Receives electrons from NapB and catalyzes the reduction of nitrate to nitrite. In Vibrio vulnificus (strain CMCP6), this protein is Periplasmic nitrate reductase.